We begin with the raw amino-acid sequence, 151 residues long: Acidic phospholipase A2 4 (151 aa).

The signal sequence occupies residues 1 to 27 (MYPAHLLVLLAVCVSLLGAASIPARPL). 7 disulfides stabilise this stretch: Cys38–Cys104, Cys54–Cys151, Cys56–Cys72, Cys71–Cys132, Cys78–Cys125, Cys88–Cys118, and Cys111–Cys123. Ca(2+) is bound by residues Tyr55, Gly57, and Gly59. His75 is a catalytic residue. Residue Asp76 participates in Ca(2+) binding. The active site involves Asp126.

The protein belongs to the phospholipase A2 family. Group I subfamily. D49 sub-subfamily. Ca(2+) serves as cofactor. Expressed by the venom gland.

The protein localises to the secreted. The catalysed reaction is a 1,2-diacyl-sn-glycero-3-phosphocholine + H2O = a 1-acyl-sn-glycero-3-phosphocholine + a fatty acid + H(+). Its function is as follows. PLA2 catalyzes the calcium-dependent hydrolysis of the 2-acyl groups in 3-sn-phosphoglycerides. The polypeptide is Acidic phospholipase A2 4 (Tropidechis carinatus (Australian rough-scaled snake)).